Reading from the N-terminus, the 370-residue chain is Proto-oncogene Wnt-1 (370 aa).

Positions 1-27 (MGLWALLPSWVSTTLLLALTALPAALA) are cleaved as a signal peptide. N-linked (GlcNAc...) asparagine glycosylation is present at Asn29. Cystine bridges form between Cys93–Cys104, Cys143–Cys151, Cys153–Cys170, Cys218–Cys232, Cys220–Cys227, Cys299–Cys330, Cys315–Cys325, Cys329–Cys369, Cys345–Cys360, Cys347–Cys357, and Cys352–Cys353. Ser224 carries O-palmitoleoyl serine; by PORCN lipidation. 2 N-linked (GlcNAc...) asparagine glycosylation sites follow: Asn316 and Asn346. Asn359 carries an N-linked (GlcNAc...) asparagine glycan.

Belongs to the Wnt family. As to quaternary structure, forms a soluble 1:1 complex with AFM; this prevents oligomerization and is required for prolonged biological activity. The complex with AFM may represent the physiological form in body fluids. Interacts with PORCN. Interacts with RSPO1, RSPO2 and RSPO3. Interacts with WLS. In terms of processing, palmitoleoylation is required for efficient binding to frizzled receptors. Palmitoleoylation is necessary for proper trafficking to cell surface. Depalmitoleoylated by NOTUM, leading to inhibit Wnt signaling pathway. In terms of tissue distribution, testis and mid-gestational embryos. In the testis, detected only in postmeiotic germ cells undergoing differentiation from round spermatids into mature spermatozoa. In the embryos, expression is restricted to the developing CNS in regions of the neural tube other than the telencephalon. Expressed in osteoblast; expression levels increase with advancing osteoblast differentiation. Expressed in the brain, femur, spleen, and hematopoietic bone marrow.

Its subcellular location is the secreted. It localises to the extracellular space. It is found in the extracellular matrix. Functionally, ligand for members of the frizzled family of seven transmembrane receptors. Acts in the canonical Wnt signaling pathway by promoting beta-catenin-dependent transcriptional activation. In some developmental processes, is also a ligand for the coreceptor RYK, thus triggering Wnt signaling. Plays an essential role in the development of the embryonic brain and central nervous system (CNS). Has a role in osteoblast function, bone development and bone homeostasis. This is Proto-oncogene Wnt-1 (Wnt1) from Mus musculus (Mouse).